The primary structure comprises 239 residues: Ribonuclease PH (239 aa).

Residues Arg-86 and 124-126 (GTR) each bind phosphate.

It belongs to the RNase PH family. Homohexameric ring arranged as a trimer of dimers.

The enzyme catalyses tRNA(n+1) + phosphate = tRNA(n) + a ribonucleoside 5'-diphosphate. Its function is as follows. Phosphorolytic 3'-5' exoribonuclease that plays an important role in tRNA 3'-end maturation. Removes nucleotide residues following the 3'-CCA terminus of tRNAs; can also add nucleotides to the ends of RNA molecules by using nucleoside diphosphates as substrates, but this may not be physiologically important. Probably plays a role in initiation of 16S rRNA degradation (leading to ribosome degradation) during starvation. The chain is Ribonuclease PH from Allorhizobium ampelinum (strain ATCC BAA-846 / DSM 112012 / S4) (Agrobacterium vitis (strain S4)).